The following is a 345-amino-acid chain: MSSNSSLLVAVQLCYANVNGSCVKIPFSPGSRVILYIVFGFGAVLAVFGNLLVMISILHFKQLHSPTNFLVASLACADFLVGVTVMPFSMVRTVESCWYFGRSFCTFHTCCDVAFCYSSLFHLCFISIDRYIAVTDPLVYPTKFTVSVSGICISVSWILPLMYSGAVFYTGVYDDGLEELSDALNCIGGCQTVVNQNWVLTDFLSFFIPTFIMIILYGNIFLVARRQAKKIENTGSKTESSSESYKARVARRERKAAKTLGVTVVAFMISWLPYSIDSLIDAFMGFITPACIYEICCWCAYYNSAMNPLIYALFYPWFRKAIKVIVTGQVLKNSSATMNLFSEHI.

At 1 to 32 (MSSNSSLLVAVQLCYANVNGSCVKIPFSPGSR) the chain is on the extracellular side. 2 N-linked (GlcNAc...) asparagine glycosylation sites follow: asparagine 4 and asparagine 19. 2 disulfides stabilise this stretch: cysteine 22/cysteine 186 and cysteine 105/cysteine 190. Residues 33–53 (VILYIVFGFGAVLAVFGNLLV) form a helical membrane-spanning segment. The Cytoplasmic segment spans residues 54 to 68 (MISILHFKQLHSPTN). The helical transmembrane segment at 69 to 89 (FLVASLACADFLVGVTVMPFS) threads the bilayer. Over 90–107 (MVRTVESCWYFGRSFCTF) the chain is Extracellular. The chain crosses the membrane as a helical span at residues 108 to 128 (HTCCDVAFCYSSLFHLCFISI). The Cytoplasmic portion of the chain corresponds to 129-147 (DRYIAVTDPLVYPTKFTVS). The chain crosses the membrane as a helical span at residues 148-168 (VSGICISVSWILPLMYSGAVF). The Extracellular portion of the chain corresponds to 169–202 (YTGVYDDGLEELSDALNCIGGCQTVVNQNWVLTD). The helical transmembrane segment at 203 to 223 (FLSFFIPTFIMIILYGNIFLV) threads the bilayer. At 224–259 (ARRQAKKIENTGSKTESSSESYKARVARRERKAAKT) the chain is on the cytoplasmic side. A helical transmembrane segment spans residues 260-276 (LGVTVVAFMISWLPYSI). Over 277 to 282 (DSLIDA) the chain is Extracellular. The chain crosses the membrane as a helical span at residues 283 to 302 (FMGFITPACIYEICCWCAYY). The Cytoplasmic segment spans residues 303 to 345 (NSAMNPLIYALFYPWFRKAIKVIVTGQVLKNSSATMNLFSEHI).

The protein belongs to the G-protein coupled receptor 1 family. Expressed at low abundance in various brain tissues, as well as in fetal liver, but not in the cerebellum or placenta. In the brain, comparable levels of expression in basal ganglia, frontal cortex, substantia nigra, amygdala and hippocampus, highest expression in hippocampus and lowest expression in basal ganglia.

It localises to the cell membrane. Functionally, olfactory receptor specific for trace amines, such as beta-phenylethylamine (beta-PEA). Trace amine compounds are enriched in animal body fluids and act on trace amine-associated receptors (TAARs) to elicit both intraspecific and interspecific innate behaviors. Beta-PEA-binding causes a conformation change that triggers signaling via G(s)-class of G alpha proteins (GNAL or GNAS). The protein is Trace amine-associated receptor 6 of Homo sapiens (Human).